A 443-amino-acid polypeptide reads, in one-letter code: Probable glycine dehydrogenase (decarboxylating) subunit 1 (443 aa).

Belongs to the GcvP family. N-terminal subunit subfamily. In terms of assembly, the glycine cleavage system is composed of four proteins: P, T, L and H. In this organism, the P 'protein' is a heterodimer of two subunits.

The catalysed reaction is N(6)-[(R)-lipoyl]-L-lysyl-[glycine-cleavage complex H protein] + glycine + H(+) = N(6)-[(R)-S(8)-aminomethyldihydrolipoyl]-L-lysyl-[glycine-cleavage complex H protein] + CO2. Functionally, the glycine cleavage system catalyzes the degradation of glycine. The P protein binds the alpha-amino group of glycine through its pyridoxal phosphate cofactor; CO(2) is released and the remaining methylamine moiety is then transferred to the lipoamide cofactor of the H protein. The protein is Probable glycine dehydrogenase (decarboxylating) subunit 1 of Desulfovibrio desulfuricans (strain ATCC 27774 / DSM 6949 / MB).